The sequence spans 820 residues: Ribosome biogenesis protein ERB1 (820 aa).

Residues 1-111 (MVRSRSNSVK…SDAGDDEVDP (111 aa)) form a disordered region. Basic and acidic residues predominate over residues 9-19 (VKKDLKRKVDE). Acidic residues predominate over residues 20-48 (PVDVQDEFDVEGLIDEGDSDDEDEAEQEV). Residues 53–64 (VTKDKKNTSKTE) show a composition bias toward basic and acidic residues. A compositionally biased stretch (acidic residues) spans 65-110 (NEEDADDESDSDAELEALIGEEEDLSGSELEDELAYFSDAGDDEVD). Residues 282–395 (RFIPSKHEAK…LRHVPGYSES (114 aa)) form a required for interaction with NOP7 region. A required for interaction with YTM1 region spans residues 395–431 (SVRERFERSLDLYLAPRVRKNKLNIDPDSLIPDLPSP). 2 WD repeats span residues 447-486 (GHKG…ELYR) and 495-535 (AQDD…FDIE). Residues 545–585 (GWGFAEGGREQQDIDTKGLDDDADSDSDDETGHVKKKSPPA) are disordered. A compositionally biased stretch (basic and acidic residues) spans 551 to 564 (GGREQQDIDTKGLD). WD repeat units lie at residues 604 to 646 (TATK…SQSP), 649 to 687 (KSKG…MAKK), 690 to 729 (PGAR…KPYK), 733 to 773 (YHEK…DMMT), and 789 to 820 (KSGL…LWTT).

This sequence belongs to the WD repeat BOP1/ERB1 family. In terms of assembly, component of the NOP7 complex, composed of ERB1, NOP7 and YTM1. The complex is held together by ERB1, which interacts with NOP7 via its N-terminal domain and with YTM1 via a high-affinity interaction between the seven-bladed beta-propeller domains of the 2 proteins. The NOP7 complex associates with the 66S pre-ribosome.

It localises to the nucleus. The protein localises to the nucleolus. Its subcellular location is the nucleoplasm. In terms of biological role, component of the NOP7 complex, which is required for maturation of the 25S and 5.8S ribosomal RNAs and formation of the 60S ribosome. This Yarrowia lipolytica (strain CLIB 122 / E 150) (Yeast) protein is Ribosome biogenesis protein ERB1.